A 77-amino-acid polypeptide reads, in one-letter code: Large ribosomal subunit protein bL31 (77 aa).

C16, C18, C37, and C40 together coordinate Zn(2+).

The protein belongs to the bacterial ribosomal protein bL31 family. Type A subfamily. As to quaternary structure, part of the 50S ribosomal subunit. Requires Zn(2+) as cofactor.

Functionally, binds the 23S rRNA. This chain is Large ribosomal subunit protein bL31, found in Pseudomonas fluorescens (strain SBW25).